A 203-amino-acid polypeptide reads, in one-letter code: ATP-dependent Clp protease proteolytic subunit (203 aa).

Ser107 functions as the Nucleophile in the catalytic mechanism. Residue His132 is part of the active site.

It belongs to the peptidase S14 family. In terms of assembly, fourteen ClpP subunits assemble into 2 heptameric rings which stack back to back to give a disk-like structure with a central cavity, resembling the structure of eukaryotic proteasomes.

Its subcellular location is the cytoplasm. The catalysed reaction is Hydrolysis of proteins to small peptides in the presence of ATP and magnesium. alpha-casein is the usual test substrate. In the absence of ATP, only oligopeptides shorter than five residues are hydrolyzed (such as succinyl-Leu-Tyr-|-NHMec, and Leu-Tyr-Leu-|-Tyr-Trp, in which cleavage of the -Tyr-|-Leu- and -Tyr-|-Trp bonds also occurs).. Functionally, cleaves peptides in various proteins in a process that requires ATP hydrolysis. Has a chymotrypsin-like activity. Plays a major role in the degradation of misfolded proteins. This is ATP-dependent Clp protease proteolytic subunit from Shewanella piezotolerans (strain WP3 / JCM 13877).